The sequence spans 432 residues: Ribosome biogenesis protein WDR12 homolog (432 aa).

The ubiquitin-like (UBL) domain stretch occupies residues 13–97 (LQIRLVALNK…ESVIEVVYFQ (85 aa)). WD repeat units lie at residues 109-146 (LHSDWIKSVRSKDDCILAGSLDGTARIWNMAGEEYAIF), 148-190 (GHES…KSVE), 197-236 (GHTQAVNAVTVNQSKTKICSVSSDKMIKIWSTDCSRKDDD), 265-303 (GHTDGIDAVVWPKEAEIITAGWDHRIKIWDTEVGVNKSD), 305-345 (NVNK…DQTV), 352-392 (SHKN…APLY), and 396-432 (GHEDKVLAVDWSEPQYIVSGGADNRIQIYQREVAQRS).

Belongs to the WD repeat WDR12/YTM1 family.

The protein resides in the nucleus. Its subcellular location is the nucleolus. The protein localises to the nucleoplasm. In terms of biological role, required for maturation of ribosomal RNAs and formation of the large ribosomal subunit. The polypeptide is Ribosome biogenesis protein WDR12 homolog (Trichoplax adhaerens (Trichoplax reptans)).